Reading from the N-terminus, the 1022-residue chain is Probable E3 ubiquitin-protein ligase HERC6 (1022 aa).

RCC1 repeat units lie at residues 41-92 (NHRV…AVCH), 93-145 (KGRV…ALSK), 147-198 (SQVF…ALSL), 200-253 (GTSF…VLTQ), and 254-304 (DGKV…AYVH). Residues 693-1017 (EATDFCKVLV…INNNRGFVSP (325 aa)) form the HECT domain. Residue Cys-985 is the Glycyl thioester intermediate of the active site.

As to expression, detected in brain, heart, placenta and testis.

It is found in the cytoplasm. It localises to the cytosol. It carries out the reaction S-ubiquitinyl-[E2 ubiquitin-conjugating enzyme]-L-cysteine + [acceptor protein]-L-lysine = [E2 ubiquitin-conjugating enzyme]-L-cysteine + N(6)-ubiquitinyl-[acceptor protein]-L-lysine.. It participates in protein modification; protein ubiquitination. Functionally, E3 ubiquitin-protein ligase which accepts ubiquitin from an E2 ubiquitin-conjugating enzyme in the form of a thioester and then directly transfers the ubiquitin to targeted substrates. The sequence is that of Probable E3 ubiquitin-protein ligase HERC6 (HERC6) from Homo sapiens (Human).